The primary structure comprises 412 residues: NADH-quinone oxidoreductase subunit D (412 aa).

The protein belongs to the complex I 49 kDa subunit family. In terms of assembly, NDH-1 is composed of 14 different subunits. Subunits NuoB, C, D, E, F, and G constitute the peripheral sector of the complex.

The protein localises to the cell inner membrane. The catalysed reaction is a quinone + NADH + 5 H(+)(in) = a quinol + NAD(+) + 4 H(+)(out). Functionally, NDH-1 shuttles electrons from NADH, via FMN and iron-sulfur (Fe-S) centers, to quinones in the respiratory chain. The immediate electron acceptor for the enzyme in this species is believed to be a menaquinone. Couples the redox reaction to proton translocation (for every two electrons transferred, four hydrogen ions are translocated across the cytoplasmic membrane), and thus conserves the redox energy in a proton gradient. The protein is NADH-quinone oxidoreductase subunit D of Flavobacterium psychrophilum (strain ATCC 49511 / DSM 21280 / CIP 103535 / JIP02/86).